We begin with the raw amino-acid sequence, 207 residues long: Glycerol-3-phosphate acyltransferase 1 (207 aa).

5 helical membrane passes run 3–23 (YVIA…QIVG), 53–73 (IVVA…LLIL), 85–105 (HIYI…PITM), 127–147 (IALI…YLAV), and 154–174 (ISFL…IVVG).

Belongs to the PlsY family. In terms of assembly, probably interacts with PlsX.

It is found in the cell membrane. The catalysed reaction is an acyl phosphate + sn-glycerol 3-phosphate = a 1-acyl-sn-glycero-3-phosphate + phosphate. It functions in the pathway lipid metabolism; phospholipid metabolism. Its function is as follows. Catalyzes the transfer of an acyl group from acyl-phosphate (acyl-PO(4)) to glycerol-3-phosphate (G3P) to form lysophosphatidic acid (LPA). This enzyme utilizes acyl-phosphate as fatty acyl donor, but not acyl-CoA or acyl-ACP. The chain is Glycerol-3-phosphate acyltransferase 1 from Oceanobacillus iheyensis (strain DSM 14371 / CIP 107618 / JCM 11309 / KCTC 3954 / HTE831).